Reading from the N-terminus, the 286-residue chain is Undecaprenyl-diphosphatase (286 aa).

The next 7 helical transmembrane spans lie at 5–25, 55–75, 92–112, 122–142, 185–205, 229–249, and 264–284; these read WFII…FLPV, IDAF…VLYW, SGFK…VLGL, LFNP…MIFA, IIGA…SFFL, MHIV…LIVV, and FAMY…FNVI.

Belongs to the UppP family.

The protein resides in the cell membrane. It carries out the reaction di-trans,octa-cis-undecaprenyl diphosphate + H2O = di-trans,octa-cis-undecaprenyl phosphate + phosphate + H(+). Catalyzes the dephosphorylation of undecaprenyl diphosphate (UPP). Confers resistance to bacitracin. This is Undecaprenyl-diphosphatase from Clostridium novyi (strain NT).